A 122-amino-acid chain; its full sequence is Beta-2-microglobulin (122 aa).

Residues 1 to 22 form the signal peptide; sequence MMARIFILALLGQLCFLPYLDA. Residues 27-115 enclose the Ig-like C1-type domain; it reads PKVQVYSRHP…HLTLQEPKVV (89 aa). A disulfide bridge links C47 with C102.

It belongs to the beta-2-microglobulin family. As to quaternary structure, heterodimer of an alpha chain and a beta chain. Beta-2-microglobulin is the beta-chain of major histocompatibility complex class I molecules.

The protein resides in the secreted. Component of the class I major histocompatibility complex (MHC). Involved in the presentation of peptide antigens to the immune system. The protein is Beta-2-microglobulin (B2M) of Trichosurus vulpecula (Brush-tailed possum).